Reading from the N-terminus, the 248-residue chain is Probable transcriptional regulatory protein MYPE8020 (248 aa).

This sequence belongs to the TACO1 family.

The protein localises to the cytoplasm. This is Probable transcriptional regulatory protein MYPE8020 from Malacoplasma penetrans (strain HF-2) (Mycoplasma penetrans).